The chain runs to 175 residues: Disulfide bond formation protein B 2 (175 aa).

The Cytoplasmic segment spans residues 1 to 9 (MYLARTRFL). A helical membrane pass occupies residues 10–26 (FFLASLACASIIGTAFY). Residues 27-44 (LQQTFGLDPCFLCLIQRA) lie on the Periplasmic side of the membrane. Cys-36 and Cys-39 are oxidised to a cystine. Residues 45 to 61 (AIIACGVLALCAACHAP) form a helical membrane-spanning segment. Topologically, residues 62 to 68 (GPTGMRR) are cytoplasmic. A helical membrane pass occupies residues 69–85 (YSLGFLLIALTGLVTAG). Topologically, residues 86–142 (AQVWLQTASADQLIPFITKLEHLLSLLSLDMCIDRLRSDAMFCAEITWTLFGISLPE) are periplasmic. A helical transmembrane segment spans residues 143–161 (WSLLAFTGLALLPLYPLFS). Topologically, residues 162–175 (EFSHWLATKDRARY) are cytoplasmic.

The protein belongs to the DsbB family.

The protein resides in the cell inner membrane. Functionally, required for disulfide bond formation in some periplasmic proteins. Acts by oxidizing the DsbA protein. This Pseudomonas savastanoi pv. phaseolicola (strain 1448A / Race 6) (Pseudomonas syringae pv. phaseolicola (strain 1448A / Race 6)) protein is Disulfide bond formation protein B 2.